Here is a 110-residue protein sequence, read N- to C-terminus: Integration host factor subunit alpha (110 aa).

Belongs to the bacterial histone-like protein family. Heterodimer of an alpha and a beta chain.

Its function is as follows. This protein is one of the two subunits of integration host factor, a specific DNA-binding protein that functions in genetic recombination as well as in transcriptional and translational control. The chain is Integration host factor subunit alpha from Nitrobacter hamburgensis (strain DSM 10229 / NCIMB 13809 / X14).